Reading from the N-terminus, the 516-residue chain is Squalene epoxidase 5 (516 aa).

2 consecutive transmembrane segments (helical) span residues 3-23 (FTNVCLWTLLAFMLTWTVFYV) and 45-65 (ATDVIIVGAGVGGSALAYALA). FAD is bound by residues 55–56 (VG), 75–76 (ER), arginine 83, phenylalanine 88, arginine 156, valine 172, aspartate 335, and methionine 348. The chain crosses the membrane as a helical span at residues 446–466 (LIYHLCAITLSSIGHLLSPFP).

This sequence belongs to the squalene monooxygenase family. It depends on FAD as a cofactor. In terms of tissue distribution, expressed in seedlings, leaves, stems and inflorescences. Detected in siliques.

Its subcellular location is the membrane. It catalyses the reaction squalene + reduced [NADPH--hemoprotein reductase] + O2 = (S)-2,3-epoxysqualene + oxidized [NADPH--hemoprotein reductase] + H2O + H(+). It functions in the pathway terpene metabolism; lanosterol biosynthesis; lanosterol from farnesyl diphosphate: step 2/3. Functionally, catalyzes the stereospecific oxidation of squalene to (S)-2,3-epoxysqualene, and is considered to be a rate-limiting enzyme in steroid biosynthesis. The polypeptide is Squalene epoxidase 5 (SQE5) (Arabidopsis thaliana (Mouse-ear cress)).